The chain runs to 329 residues: MNSMTEQKALELAIKEIEKKFGKETFSQSESFDNQVIKSGSILLDNAIGVGGYPKGKIIEIYGNESSGKTTIALQCVKECIKEGGSVAYIDAECSIDSKYLSHLGIDPTKLLVATPEYGEQAFSIIDALIKTNMVDLIVVDSVAALVPKNDIESSMEDQSMGTHARMMSKGLKILQTSLSKHKTTVIFINQVREKIGVMFGNNEITTGGRALKFFSTLRLDVRRSELIKSGTDVIGIRSKITVTKNKVAPPFKNCFVDIFFNKGFDPTKEIIDFAIEYEIIKKSGSWFYYNETKLAQGRNNLDSYLKENNEIYDEIKKLVFDEIDKNNK.

63-70 is a binding site for ATP; the sequence is GNESSGKT.

The protein belongs to the RecA family.

Its subcellular location is the cytoplasm. Functionally, can catalyze the hydrolysis of ATP in the presence of single-stranded DNA, the ATP-dependent uptake of single-stranded DNA by duplex DNA, and the ATP-dependent hybridization of homologous single-stranded DNAs. It interacts with LexA causing its activation and leading to its autocatalytic cleavage. This chain is Protein RecA, found in Malacoplasma penetrans (strain HF-2) (Mycoplasma penetrans).